Consider the following 58-residue polypeptide: Protein YecU (58 aa).

The polypeptide is Protein YecU (Escherichia coli (strain K12)).